A 232-amino-acid polypeptide reads, in one-letter code: Ubiquinone biosynthesis O-methyltransferase (232 aa).

S-adenosyl-L-methionine is bound by residues Arg-36, Gly-55, Asp-76, and Met-120.

Belongs to the methyltransferase superfamily. UbiG/COQ3 family.

It catalyses the reaction a 3-demethylubiquinol + S-adenosyl-L-methionine = a ubiquinol + S-adenosyl-L-homocysteine + H(+). It carries out the reaction a 3-(all-trans-polyprenyl)benzene-1,2-diol + S-adenosyl-L-methionine = a 2-methoxy-6-(all-trans-polyprenyl)phenol + S-adenosyl-L-homocysteine + H(+). The protein operates within cofactor biosynthesis; ubiquinone biosynthesis. O-methyltransferase that catalyzes the 2 O-methylation steps in the ubiquinone biosynthetic pathway. The protein is Ubiquinone biosynthesis O-methyltransferase of Thiobacillus denitrificans (strain ATCC 25259 / T1).